The sequence spans 175 residues: Methylmalonyl-CoA epimerase, mitochondrial (175 aa).

The transit peptide at 1–35 (MARVLKVAAASAAGLFPRLRTPVSTVRTSASLSSH) directs the protein to the mitochondrion. In terms of domain architecture, VOC spans 46–175 (RLNHVAVAVP…GGVLVELEQA (130 aa)). Position 49 (histidine 49) interacts with Co(2+). Position 113 is an N6-succinyllysine (lysine 113). Residue histidine 121 participates in Co(2+) binding. The residue at position 149 (lysine 149) is an N6-acetyllysine; alternate. An N6-succinyllysine; alternate modification is found at lysine 149. Glutamate 171 lines the Co(2+) pocket.

This sequence belongs to the methylmalonyl-CoA epimerase family.

Its subcellular location is the mitochondrion. The enzyme catalyses (R)-methylmalonyl-CoA = (S)-methylmalonyl-CoA. In terms of biological role, methylmalonyl-CoA epimerase involved in propionyl-CoA metabolism. The chain is Methylmalonyl-CoA epimerase, mitochondrial (MCEE) from Bos taurus (Bovine).